We begin with the raw amino-acid sequence, 345 residues long: High mobility group protein 20A (345 aa).

Disordered regions lie at residues 1 to 130 and 166 to 206; these read MEST…PFPE and QKYQ…EKES. Polar residues-rich tracts occupy residues 22-38 and 57-67; these read NNQP…SSQA and LHQSGEQQLGN. Basic residues predominate over residues 80 to 94; that stretch reads ARRGGWNKGRKRKRS. Positions 101-169 form a DNA-binding region, HMG box; that stretch reads PKAPLTGYVR…RYTKELQKYQ (69 aa). Residues 112 to 125 are compositionally biased toward basic and acidic residues; it reads MNERREQLRTERPD. Residues 167–178 are compositionally biased toward polar residues; that stretch reads KYQNTDAYQTYS. Positions 179-189 are enriched in basic residues; sequence RKAKSRQKGRQ. The stretch at 227 to 285 forms a coiled coil; the sequence is SKAREAELRQLRKSNMEFEERNAALQKHVESMRSAVQRLEAELSQEHERNSLLQQHLQS.

The protein resides in the nucleus. Plays a role in neuronal differentiation. This is High mobility group protein 20A (hmg20a) from Xenopus laevis (African clawed frog).